The chain runs to 72 residues: Translation initiation factor IF-1 (72 aa).

Positions 1–72 (MAKEDNFELE…SKGRITYRAR (72 aa)) constitute an S1-like domain.

The protein belongs to the IF-1 family. In terms of assembly, component of the 30S ribosomal translation pre-initiation complex which assembles on the 30S ribosome in the order IF-2 and IF-3, IF-1 and N-formylmethionyl-tRNA(fMet); mRNA recruitment can occur at any time during PIC assembly.

The protein localises to the cytoplasm. In terms of biological role, one of the essential components for the initiation of protein synthesis. Stabilizes the binding of IF-2 and IF-3 on the 30S subunit to which N-formylmethionyl-tRNA(fMet) subsequently binds. Helps modulate mRNA selection, yielding the 30S pre-initiation complex (PIC). Upon addition of the 50S ribosomal subunit IF-1, IF-2 and IF-3 are released leaving the mature 70S translation initiation complex. The protein is Translation initiation factor IF-1 of Saccharophagus degradans (strain 2-40 / ATCC 43961 / DSM 17024).